The following is a 120-amino-acid chain: Large ribosomal subunit protein uL22 (120 aa).

The tract at residues 1–22 (MLVNRRYTAKGKNLPSSPKKVR) is disordered.

This sequence belongs to the universal ribosomal protein uL22 family. Part of the 50S ribosomal subunit.

In terms of biological role, this protein binds specifically to 23S rRNA; its binding is stimulated by other ribosomal proteins, e.g. L4, L17, and L20. It is important during the early stages of 50S assembly. It makes multiple contacts with different domains of the 23S rRNA in the assembled 50S subunit and ribosome. The globular domain of the protein is located near the polypeptide exit tunnel on the outside of the subunit, while an extended beta-hairpin is found that lines the wall of the exit tunnel in the center of the 70S ribosome. In Borreliella burgdorferi (strain ATCC 35210 / DSM 4680 / CIP 102532 / B31) (Borrelia burgdorferi), this protein is Large ribosomal subunit protein uL22.